A 283-amino-acid polypeptide reads, in one-letter code: MTLTAPPRLLLVHAHPDDESLWTGGTIARYAADGVQVTVVTCTLGEEGEIIPPALRELAADAADQLGGYRVAELRAACAALGVTDHRFLGGHGRWRDSGMVGTAANAHPRAFVAGSAQEQADELLAIINAVKPQVVVTYDGFGGYGHPDHIRAHEITTAAVAASSVVERLFHTVTSREETEAGARELAELADLPFRLPEPGELPAVDDAVITTTIDVSEHLMAKLRALRAHTTQVTVWQDGAGGASYALSNGIAQPVLPNEHYVLASGPAEGAERDLFGGLGG.

Positions 15, 18, and 150 each coordinate Zn(2+).

It belongs to the MshB deacetylase family. Zn(2+) serves as cofactor.

It catalyses the reaction 1D-myo-inositol 2-acetamido-2-deoxy-alpha-D-glucopyranoside + H2O = 1D-myo-inositol 2-amino-2-deoxy-alpha-D-glucopyranoside + acetate. In terms of biological role, catalyzes the deacetylation of 1D-myo-inositol 2-acetamido-2-deoxy-alpha-D-glucopyranoside (GlcNAc-Ins) in the mycothiol biosynthesis pathway. This is 1D-myo-inositol 2-acetamido-2-deoxy-alpha-D-glucopyranoside deacetylase from Actinosynnema mirum (strain ATCC 29888 / DSM 43827 / JCM 3225 / NBRC 14064 / NCIMB 13271 / NRRL B-12336 / IMRU 3971 / 101).